Consider the following 236-residue polypeptide: Small ribosomal subunit protein uS2c (236 aa).

Belongs to the universal ribosomal protein uS2 family.

Its subcellular location is the plastid. The protein resides in the chloroplast. This Zea mays (Maize) protein is Small ribosomal subunit protein uS2c (rps2).